Reading from the N-terminus, the 90-residue chain is QIEAGRRAMTRNVRRGGKTWVRIFPDKPVTLRAAETRMGSGKGNPEYWVAVVKPGRILYEMGGVAENIARKAISIAASKMPIRTQFIISG.

The protein belongs to the universal ribosomal protein uL16 family. As to quaternary structure, part of the 50S ribosomal subunit.

The protein resides in the plastid. It localises to the chloroplast. The chain is Large ribosomal subunit protein uL16c (rpl16) from Oenothera ammophila (Evening primerose).